We begin with the raw amino-acid sequence, 274 residues long: 3-methyl-2-oxobutanoate hydroxymethyltransferase (274 aa).

Positions 46 and 85 each coordinate Mg(2+). Residues 46–47 (DS), Asp-85, and Lys-114 each bind 3-methyl-2-oxobutanoate. Glu-116 is a Mg(2+) binding site. Glu-183 acts as the Proton acceptor in catalysis.

The protein belongs to the PanB family. Homodecamer; pentamer of dimers. Mg(2+) serves as cofactor.

It localises to the cytoplasm. The enzyme catalyses 3-methyl-2-oxobutanoate + (6R)-5,10-methylene-5,6,7,8-tetrahydrofolate + H2O = 2-dehydropantoate + (6S)-5,6,7,8-tetrahydrofolate. The protein operates within cofactor biosynthesis; coenzyme A biosynthesis. Functionally, catalyzes the reversible reaction in which hydroxymethyl group from 5,10-methylenetetrahydrofolate is transferred onto alpha-ketoisovalerate to form ketopantoate. This is 3-methyl-2-oxobutanoate hydroxymethyltransferase from Aeropyrum pernix (strain ATCC 700893 / DSM 11879 / JCM 9820 / NBRC 100138 / K1).